Here is a 150-residue protein sequence, read N- to C-terminus: UPF0756 membrane protein YPN_1328 (150 aa).

4 consecutive transmembrane segments (helical) span residues 16-36 (ALGI…LIAI), 51-71 (YGLT…IASG), 88-108 (ILAI…VSLM), and 114-134 (VVAG…GVPV).

It belongs to the UPF0756 family.

Its subcellular location is the cell membrane. The polypeptide is UPF0756 membrane protein YPN_1328 (Yersinia pestis bv. Antiqua (strain Nepal516)).